Consider the following 138-residue polypeptide: Ribonuclease kappa-A (138 aa).

An N-terminal signal peptide occupies residues 1 to 24 (MVLYFSPVLTFFLANFFNSKSTTT). Topologically, residues 25–75 (ENLQVFLVENQHRDSKRKINPTFSKKGIEVRQQNENLWSKIVALRFDYSVW) are extracellular. The helical transmembrane segment at 76 to 96 (GIIQLVLMMGLFFYINSVALI) threads the bilayer. Topologically, residues 97–138 (EDLPIDEEFNSVEEFYTAATSAYNQNAYTVGLPVHLCAYASI) are cytoplasmic.

This sequence belongs to the RNase K family.

It is found in the membrane. Endoribonuclease. This Ceratitis capitata (Mediterranean fruit fly) protein is Ribonuclease kappa-A.